Consider the following 451-residue polypeptide: Prenyltransferase asqH1 (451 aa).

Residues 14–37 (AEDQSTRKVHWGQEGSGQSPEARP) form a disordered region. Residue Glu-120 coordinates L-tryptophan. The substrate site is built by Arg-137, Arg-274, Lys-276, Tyr-278, and Tyr-373.

The protein belongs to the tryptophan dimethylallyltransferase family.

The catalysed reaction is quinolinone B + dimethylallyl diphosphate = peniprequinolone + diphosphate. It functions in the pathway secondary metabolite biosynthesis. Its pathway is alkaloid biosynthesis. The protein operates within mycotoxin biosynthesis. Functionally, prenyltransferase; part of the gene cluster that mediates the biosynthesis of the aspoquinolone mycotoxins. Within the pathway, the prenyltransferase asqH1 catalyzes the canonical Friedel-Crafts alkylation of quinolinone B with dimethylallyl cation to yield dimethylallyl quinolone. The first step of the pathway is catalyzed by the nonribosomal peptide synthetase asqK that condenses anthranilic acid and O-methyl-L-tyrosine to produce 4'-methoxycyclopeptin. 4'-methoxycyclopeptin is then converted to 4'-methoxydehydrocyclopeptin by the ketoglutarate-dependent dioxygenase asqJ. AsqJ also converts its first product 4'-methoxydehydrocyclopeptin to 4'-methoxycyclopenin. The following conversion of 4'-methoxycyclopenin into 4'-methoxyviridicatin is catalyzed by the cyclopenase asqI. 4'-methoxyviridicatin is the precursor of quinolone natural products, and is further converted to quinolinone B. The prenyltransferase asqH1 then catalyzes the canonical Friedel-Crafts alkylation of quinolinone B with dimethylallyl cation to yield dimethylallyl quinolone, which is subjected to FAD-dependent dehydrogenation by the FAD-linked oxidoreductase asqF to yield conjugated aryl diene. The delta(3') double bond then serves as the site of the second alkylation with DMAPP catalyzed by the prenyltransferase asqH2 to yield a carbenium ion intermediate, which can be attacked by H(2)O to yield a styrenyl quinolone containing a C3'-hydroxyprenyl chain. The FAD-dependent monooxygenase asqG performs epoxidation of the terminal C7'-C8' olefin. Finally, after dehydratation of the epoxide at C3 by asqC, the quinolone epoxide rearrangement protein asqO catalyzes an enzymatic 3-exo-tet cyclization to yield the cyclopropyl-THF ring system in aspoquinolone. This chain is Prenyltransferase asqH1, found in Emericella nidulans (strain FGSC A4 / ATCC 38163 / CBS 112.46 / NRRL 194 / M139) (Aspergillus nidulans).